We begin with the raw amino-acid sequence, 213 residues long: Kynurenine formamidase (213 aa).

Position 18 (Trp18) interacts with substrate. Zn(2+) is bound by residues His48, His52, and Asp54. His58 functions as the Proton donor/acceptor in the catalytic mechanism. His160 and Glu172 together coordinate Zn(2+).

The protein belongs to the Cyclase 1 superfamily. KynB family. In terms of assembly, homodimer. The cofactor is Zn(2+).

It catalyses the reaction N-formyl-L-kynurenine + H2O = L-kynurenine + formate + H(+). It participates in amino-acid degradation; L-tryptophan degradation via kynurenine pathway; L-kynurenine from L-tryptophan: step 2/2. Catalyzes the hydrolysis of N-formyl-L-kynurenine to L-kynurenine, the second step in the kynurenine pathway of tryptophan degradation. This is Kynurenine formamidase from Burkholderia ambifaria (strain ATCC BAA-244 / DSM 16087 / CCUG 44356 / LMG 19182 / AMMD) (Burkholderia cepacia (strain AMMD)).